Consider the following 352-residue polypeptide: Ion-translocating oxidoreductase complex subunit D (352 aa).

The next 5 helical transmembrane spans lie at 20-40 (IMLL…WFFG), 42-62 (GTLV…ALVL), 78-109 (ALLT…VIIA), 123-143 (PAMI…TSWL), and 148-168 (IAVN…GHTA). Thr-187 is subject to FMN phosphoryl threonine. The next 5 helical transmembrane spans lie at 214–234 (ILAG…GLWL), 242–262 (WHIP…GWLF), 267–287 (LAAP…FFIL), 301–321 (LIFG…GGYP), and 322–342 (DGVA…DYYT).

This sequence belongs to the NqrB/RnfD family. In terms of assembly, the complex is composed of six subunits: RsxA, RsxB, RsxC, RsxD, RsxE and RsxG. FMN is required as a cofactor.

The protein resides in the cell inner membrane. In terms of biological role, part of a membrane-bound complex that couples electron transfer with translocation of ions across the membrane. Required to maintain the reduced state of SoxR. In Escherichia coli (strain SE11), this protein is Ion-translocating oxidoreductase complex subunit D.